We begin with the raw amino-acid sequence, 241 residues long: Thiamine import ATP-binding protein ThiQ (241 aa).

Residues Ile-7–Ile-235 enclose the ABC transporter domain. Position 37–44 (Gly-37–Ser-44) interacts with ATP.

It belongs to the ABC transporter superfamily. Thiamine importer (TC 3.A.1.19.1) family. In terms of assembly, the complex is composed of two ATP-binding proteins (ThiQ), two transmembrane proteins (ThiP) and a solute-binding protein (ThiB).

Its subcellular location is the cell inner membrane. The enzyme catalyses thiamine(out) + ATP + H2O = thiamine(in) + ADP + phosphate + H(+). In terms of biological role, part of the ABC transporter complex ThiBPQ involved in thiamine import. Responsible for energy coupling to the transport system. The protein is Thiamine import ATP-binding protein ThiQ of Brucella melitensis biotype 1 (strain ATCC 23456 / CCUG 17765 / NCTC 10094 / 16M).